A 200-amino-acid chain; its full sequence is Adenylate kinase (200 aa).

Residue 10–15 (GAGKGT) coordinates ATP. Residues 30 to 59 (STGDMLRAAVAAGTPVGLEAKSIMESGGLV) are NMP. Residues T31, R36, 57–59 (GLV), 85–88 (GFPR), and Q92 each bind AMP. Residues 126-142 (KRAEETAARGQPVRKDD) are LID. ATP is bound at residue R127. Residues R139 and R150 each contribute to the AMP site. K178 lines the ATP pocket.

This sequence belongs to the adenylate kinase family. As to quaternary structure, monomer.

The protein resides in the cytoplasm. It carries out the reaction AMP + ATP = 2 ADP. It participates in purine metabolism; AMP biosynthesis via salvage pathway; AMP from ADP: step 1/1. In terms of biological role, catalyzes the reversible transfer of the terminal phosphate group between ATP and AMP. Plays an important role in cellular energy homeostasis and in adenine nucleotide metabolism. In Methylorubrum populi (strain ATCC BAA-705 / NCIMB 13946 / BJ001) (Methylobacterium populi), this protein is Adenylate kinase.